Here is a 167-residue protein sequence, read N- to C-terminus: MKKIIGLFFIIILIVINISILAYDYPKAEQEQKWDEVDSIAGEGGLIFRPGRVKNESTKAVGCTVNKYLWQAALEIISFIPLASVDSNGGVIITEWYSPRSNTNFRFKINIFIKDDVISPDAIEVKIFEEILKNKQWVLNENTSNLAIMLEDKILRKARDIYINSVR.

A helical membrane pass occupies residues 4–24 (IIGLFFIIILIVINISILAYD).

It is found in the membrane. This is an uncharacterized protein from Rickettsia prowazekii (strain Madrid E).